A 341-amino-acid chain; its full sequence is Methionine import ATP-binding protein MetN 1 (341 aa).

Residues 2-241 (IEFKNVNKVF…PQTNTAKNFV (240 aa)) enclose the ABC transporter domain. 38 to 45 (GYSGAGKS) is a binding site for ATP.

It belongs to the ABC transporter superfamily. Methionine importer (TC 3.A.1.24) family. As to quaternary structure, the complex is composed of two ATP-binding proteins (MetN), two transmembrane proteins (MetI) and a solute-binding protein (MetQ).

The protein localises to the cell membrane. It carries out the reaction L-methionine(out) + ATP + H2O = L-methionine(in) + ADP + phosphate + H(+). The enzyme catalyses D-methionine(out) + ATP + H2O = D-methionine(in) + ADP + phosphate + H(+). In terms of biological role, part of the ABC transporter complex MetNIQ involved in methionine import. Responsible for energy coupling to the transport system. In Staphylococcus epidermidis (strain ATCC 35984 / DSM 28319 / BCRC 17069 / CCUG 31568 / BM 3577 / RP62A), this protein is Methionine import ATP-binding protein MetN 1.